The sequence spans 357 residues: MEYKRFKTRQIKVGNVLIGGDAPISVQSMLFTKTRDIEGSLEQINRLYFAGANIVRLACLDMADARALKEIKAKSPLPLIVDIHFNHNLAVYCAEFIDGVRINPGNIGSKENIKEVVKACKERGIPIRIGVNHGSIEKQFSDKFGYGVDAMLESAMYNIKLLEDLDFFDIKISMKTSDAQKTIEAYERLRPLCDYPFHLGVTEAGTKFHSTVKSSIALGNLLLKGIGDTMRVSMTGELEEEIRVARAILQDSGVQKSGVNIISCPTCGRIQSDLLSAIKIVEEKTKHIKEPLNISVMGCVVNALGEAKGADVAIAFGKNQGLVIRHGEVVAKLKESELVDRFLAEVEDEVKSRVVKE.

Residues C264, C267, C299, and E306 each coordinate [4Fe-4S] cluster.

The protein belongs to the IspG family. It depends on [4Fe-4S] cluster as a cofactor.

It carries out the reaction (2E)-4-hydroxy-3-methylbut-2-enyl diphosphate + oxidized [flavodoxin] + H2O + 2 H(+) = 2-C-methyl-D-erythritol 2,4-cyclic diphosphate + reduced [flavodoxin]. It functions in the pathway isoprenoid biosynthesis; isopentenyl diphosphate biosynthesis via DXP pathway; isopentenyl diphosphate from 1-deoxy-D-xylulose 5-phosphate: step 5/6. In terms of biological role, converts 2C-methyl-D-erythritol 2,4-cyclodiphosphate (ME-2,4cPP) into 1-hydroxy-2-methyl-2-(E)-butenyl 4-diphosphate. In Campylobacter jejuni subsp. jejuni serotype O:2 (strain ATCC 700819 / NCTC 11168), this protein is 4-hydroxy-3-methylbut-2-en-1-yl diphosphate synthase (flavodoxin).